A 35-amino-acid chain; its full sequence is MYDPPFLEALMITASFFAIFIIIVVSVLLLEGGGD.

A helical transmembrane segment spans residues leucine 10 to leucine 30.

The protein localises to the membrane. This is an uncharacterized protein from Salmonella typhimurium (strain LT2 / SGSC1412 / ATCC 700720).